We begin with the raw amino-acid sequence, 349 residues long: sn-glycerol-3-phosphate import ATP-binding protein UgpC (349 aa).

The 231-residue stretch at 4–234 folds into the ABC transporter domain; it reads ISLRDVRKSY…PATTFVAGFI (231 aa). Residue 36–43 coordinates ATP; the sequence is GPSGCGKS.

It belongs to the ABC transporter superfamily. sn-glycerol-3-phosphate importer (TC 3.A.1.1.3) family. As to quaternary structure, the complex is composed of two ATP-binding proteins (UgpC), two transmembrane proteins (UgpA and UgpE) and a solute-binding protein (UgpB).

It localises to the cell inner membrane. It catalyses the reaction sn-glycerol 3-phosphate(out) + ATP + H2O = sn-glycerol 3-phosphate(in) + ADP + phosphate + H(+). Its function is as follows. Part of the ABC transporter complex UgpBAEC involved in sn-glycerol-3-phosphate (G3P) import. Responsible for energy coupling to the transport system. This chain is sn-glycerol-3-phosphate import ATP-binding protein UgpC, found in Cereibacter sphaeroides (strain ATCC 17023 / DSM 158 / JCM 6121 / CCUG 31486 / LMG 2827 / NBRC 12203 / NCIMB 8253 / ATH 2.4.1.) (Rhodobacter sphaeroides).